A 273-amino-acid chain; its full sequence is Large ribosomal subunit protein uL2 (273 aa).

The interval 228-273 (VDHPHGGGEGKTSGGRHPVTPWGFPTKGKKTRKNKRTSKFIVKKRK) is disordered. The segment covering 254–273 (KGKKTRKNKRTSKFIVKKRK) has biased composition (basic residues).

This sequence belongs to the universal ribosomal protein uL2 family. As to quaternary structure, part of the 50S ribosomal subunit. Forms a bridge to the 30S subunit in the 70S ribosome.

Its function is as follows. One of the primary rRNA binding proteins. Required for association of the 30S and 50S subunits to form the 70S ribosome, for tRNA binding and peptide bond formation. It has been suggested to have peptidyltransferase activity; this is somewhat controversial. Makes several contacts with the 16S rRNA in the 70S ribosome. The sequence is that of Large ribosomal subunit protein uL2 from Rickettsia peacockii (strain Rustic).